The primary structure comprises 542 residues: MGRADPEEGQLPAPVKPPDGGWGWIVLFGCFVITGFSYAFPKAVSVYFKELMKDFHVGYSDTAWISSIMLAMLYGTGPVCSIMVNQFGCRPVMLIGGLLASSGMILASFTTNIIELYLTAGVLTGLGMALNFQPSLIMLGTYFDKRRPLANGLAAAGSPVFLSSLSPLGQVLLEKFGWRGGFLIMGGLLLNCCTCGAVMRPLDAGMKRKTEKAQDKYEAKEMLPMGGKSEEGISTTDGTKKTKKAKKKPKKGKKLLDFSIFSNRGFIIYTISKFILVLGLFVPPILLVNYAKDTGVPDTEAAFLLSIIGFIDIFARPACGMVAGLKWVRPHVAYLFSFAMLFNGLTDICSARASNYTGLVIFCVFFGISYGMVGALQFEVLMAIVGSQKFSSAIGLVLLIEAFAVLIGPPSAGRLVDALKNYEVIFYLAGSEVVLSALFLAMATYCCLNRGKKTPPPEKNPSAGGGSDTEEAESDVQEAEEHSSDNHQPAHGTDKATVAANEEANHVEDEQSGEGGRCPEADGEVSSRAGCNADQTVERDSF.

Residues 1 to 19 (MGRADPEEGQLPAPVKPPD) are Cytoplasmic-facing. Residues 20 to 40 (GGWGWIVLFGCFVITGFSYAF) traverse the membrane as a helical segment. Residues 41–63 (PKAVSVYFKELMKDFHVGYSDTA) lie on the Extracellular side of the membrane. A helical membrane pass occupies residues 64-84 (WISSIMLAMLYGTGPVCSIMV). Over 85–93 (NQFGCRPVM) the chain is Cytoplasmic. A helical membrane pass occupies residues 94-114 (LIGGLLASSGMILASFTTNII). Residues 115–119 (ELYLT) are Extracellular-facing. The helical transmembrane segment at 120–140 (AGVLTGLGMALNFQPSLIMLG) threads the bilayer. At 141 to 152 (TYFDKRRPLANG) the chain is on the cytoplasmic side. Residues 153-173 (LAAAGSPVFLSSLSPLGQVLL) form a helical membrane-spanning segment. At 174–181 (EKFGWRGG) the chain is on the extracellular side. The helical transmembrane segment at 182 to 202 (FLIMGGLLLNCCTCGAVMRPL) threads the bilayer. The Cytoplasmic portion of the chain corresponds to 203 to 265 (DAGMKRKTEK…LDFSIFSNRG (63 aa)). The disordered stretch occupies residues 226–247 (GGKSEEGISTTDGTKKTKKAKK). A helical transmembrane segment spans residues 266 to 286 (FIIYTISKFILVLGLFVPPIL). The Extracellular portion of the chain corresponds to 287–301 (LVNYAKDTGVPDTEA). A helical transmembrane segment spans residues 302 to 322 (AFLLSIIGFIDIFARPACGMV). Topologically, residues 323-330 (AGLKWVRP) are cytoplasmic. The helical transmembrane segment at 331–351 (HVAYLFSFAMLFNGLTDICSA) threads the bilayer. Residues 352–357 (RASNYT) are Extracellular-facing. Residues 358-378 (GLVIFCVFFGISYGMVGALQF) traverse the membrane as a helical segment. Topologically, residues 379–392 (EVLMAIVGSQKFSS) are cytoplasmic. A helical transmembrane segment spans residues 393-413 (AIGLVLLIEAFAVLIGPPSAG). Residues 414–423 (RLVDALKNYE) lie on the Extracellular side of the membrane. Residues 424–444 (VIFYLAGSEVVLSALFLAMAT) form a helical membrane-spanning segment. Topologically, residues 445-542 (YCCLNRGKKT…ADQTVERDSF (98 aa)) are cytoplasmic. The segment at 453–542 (KTPPPEKNPS…ADQTVERDSF (90 aa)) is disordered. Basolateral sorting signal regions lie at residues 465–510 (GGSD…VEDE) and 511–532 (QSGE…AGCN). Residues 468–478 (DTEEAESDVQE) are compositionally biased toward acidic residues.

It belongs to the major facilitator superfamily. Monocarboxylate porter (TC 2.A.1.13) family. Retinal pigment epithelium.

It is found in the basolateral cell membrane. The catalysed reaction is (S)-lactate(in) + H(+)(in) = (S)-lactate(out) + H(+)(out). Functionally, probable retinal pigment epithelium (RPE)-specific proton-coupled L-lactate transporter. May facilitate transport of lactate and H(+) out of the retina and could therefore play a role in pH and ion homeostasis of the outer retina. In Gallus gallus (Chicken), this protein is Monocarboxylate transporter 3 (SLC16A8).